The chain runs to 223 residues: Adenylate kinase (223 aa).

10-15 (GSGKGT) lines the ATP pocket. The NMP stretch occupies residues 30-59 (ESGAIFRQHIGGGTELGKKAKEYIDRGDLV). AMP-binding positions include Ser31, Arg36, 57–59 (DLV), 84–87 (GFPR), and Gln91. Residues 125-164 (GRRLCKNDNNHPNNIFIDAIKPDGDVCRVCGGSLSARADD) form an LID region. Arg126 contacts ATP. AMP-binding residues include Arg161 and Arg173. Position 209 (Gly209) interacts with ATP.

This sequence belongs to the adenylate kinase family. In terms of assembly, monomer.

The protein resides in the cytoplasm. The enzyme catalyses AMP + ATP = 2 ADP. It functions in the pathway purine metabolism; AMP biosynthesis via salvage pathway; AMP from ADP: step 1/1. Its function is as follows. Catalyzes the reversible transfer of the terminal phosphate group between ATP and AMP. Plays an important role in cellular energy homeostasis and in adenine nucleotide metabolism. This is Adenylate kinase from Nitratidesulfovibrio vulgaris (strain DSM 19637 / Miyazaki F) (Desulfovibrio vulgaris).